The primary structure comprises 327 residues: Phenylalanine--tRNA ligase alpha subunit (327 aa).

Glu252 contributes to the Mg(2+) binding site.

Belongs to the class-II aminoacyl-tRNA synthetase family. Phe-tRNA synthetase alpha subunit type 1 subfamily. As to quaternary structure, tetramer of two alpha and two beta subunits. Mg(2+) serves as cofactor.

Its subcellular location is the cytoplasm. The catalysed reaction is tRNA(Phe) + L-phenylalanine + ATP = L-phenylalanyl-tRNA(Phe) + AMP + diphosphate + H(+). The sequence is that of Phenylalanine--tRNA ligase alpha subunit from Serratia proteamaculans (strain 568).